Here is a 633-residue protein sequence, read N- to C-terminus: MLRRGYKASERRRHLSERLSWHQDQALSSSIYLLREMGPTGFLLREEEPEYMDFRVFLGNPHVCNCSTFPKGGELCKHICWVLLKKFKLPRNHESALQLGLGEREISDLLRGIHRVQTPQPGTNDENEHVEEDGYIKQKEIDSEDICSICQELLLEKKLPVTFCRFGCGNSIHIKCMKILANYQSTSNTSMLKCPLCRKEFAPLKLILEEFKNSSKLVAAAEKERLDKHLGIPCNNCKQFPIEGKCYKCTECIEYHLCQECFDSCCHLSHTFTFREKRNQKWRSLEKRADEVVKYIDTKNEIEEKMSHFQEKQGQVYTPKHIVRSLPLQLITKNSKLLAPGYQCLLCLKAFHLGQHTRLLPCTHKFHRKCIDNWLFHKCNSCPIDGQVIYNPLTWKNSAVNGQAHQSVSNRDIIHLSKQKEPDLFIPGTGLVLKQNRLGILPSIPQCNFDELNTPQSPKDAYENTTIDNLCSIKLDNSNSKKLTYDYKISQHFPRYLQDLPTVSFGKIPSQTLLPPIVHKNIVCPTAMESPCISGKFHTSLSRMTKGCKCNNHNLKKTPATKIREDNKRSTLLPEDFNLIVNWSTAKLSLSKRYSNCMGEITRKCSHLSRQPVSHSVNTKSTELSLIIEGVQL.

An SWIM-type zinc finger spans residues 54–87; that stretch reads FRVFLGNPHVCNCSTFPKGGELCKHICWVLLKKF. An RING-type 1 zinc finger spans residues 147-198; the sequence is CSICQELLLEKKLPVTFCRFGCGNSIHIKCMKILANYQSTSNTSMLKCPLCR. The ZZ-type zinc-finger motif lies at 229-280; that stretch reads HLGIPCNNCKQFPIEGKCYKCTECIEYHLCQECFDSCCHLSHTFTFREKRNQ. Positions 234, 237, 249, 252, 258, 261, 267, and 270 each coordinate Zn(2+). An RING-type 2 zinc finger spans residues 344–388; it reads CLLCLKAFHLGQHTRLLPCTHKFHRKCIDNWLFHKCNSCPIDGQV.

In terms of assembly, dimer. Interacts with UBE2D1. In terms of processing, polyubiquitinated. Polyubiquitination is followed by degradation via the proteasome. In terms of tissue distribution, expression is testis-specific.

It catalyses the reaction S-ubiquitinyl-[E2 ubiquitin-conjugating enzyme]-L-cysteine + [acceptor protein]-L-lysine = [E2 ubiquitin-conjugating enzyme]-L-cysteine + N(6)-ubiquitinyl-[acceptor protein]-L-lysine.. E3 ubiquitin-protein ligase involved in the regulation of Fas-, DR3- and DR4-mediated apoptosis. Functions in conjunction with the UBE2D1, UBE2D3 and UBE2E1 E2 ubiquitin-conjugating enzymes. This chain is E3 ubiquitin-protein ligase ZSWIM2, found in Homo sapiens (Human).